A 341-amino-acid polypeptide reads, in one-letter code: Methionine import ATP-binding protein MetN 2 (341 aa).

Residues 2–241 enclose the ABC transporter domain; it reads IELKEVVKEY…PQHTVTKRFV (240 aa). 38 to 45 contacts ATP; it reads GFSGAGKS.

The protein belongs to the ABC transporter superfamily. Methionine importer (TC 3.A.1.24) family. The complex is composed of two ATP-binding proteins (MetN), two transmembrane proteins (MetI) and a solute-binding protein (MetQ).

It localises to the cell membrane. It catalyses the reaction L-methionine(out) + ATP + H2O = L-methionine(in) + ADP + phosphate + H(+). It carries out the reaction D-methionine(out) + ATP + H2O = D-methionine(in) + ADP + phosphate + H(+). Functionally, part of the ABC transporter complex MetNIQ involved in methionine import. Responsible for energy coupling to the transport system. The protein is Methionine import ATP-binding protein MetN 2 of Staphylococcus aureus (strain USA300).